Consider the following 379-residue polypeptide: Cytochrome b (379 aa).

Transmembrane regions (helical) follow at residues 33 to 53 (FGSL…FLAM), 77 to 98 (WLIR…FIHV), 113 to 133 (WNIG…GYVL), and 178 to 198 (FFAF…VHLL). Residues histidine 83 and histidine 97 each contribute to the heme b site. Heme b contacts are provided by histidine 182 and histidine 196. Position 201 (histidine 201) interacts with a ubiquinone. The next 4 membrane-spanning stretches (helical) occupy residues 226-246 (IKDL…ALFF), 288-308 (LGGV…PLLN), 320-340 (ITQI…WIGG), and 347-367 (FTMI…ILMP).

It belongs to the cytochrome b family. In terms of assembly, the cytochrome bc1 complex contains 11 subunits: 3 respiratory subunits (MT-CYB, CYC1 and UQCRFS1), 2 core proteins (UQCRC1 and UQCRC2) and 6 low-molecular weight proteins (UQCRH/QCR6, UQCRB/QCR7, UQCRQ/QCR8, UQCR10/QCR9, UQCR11/QCR10 and a cleavage product of UQCRFS1). This cytochrome bc1 complex then forms a dimer. Heme b is required as a cofactor.

It is found in the mitochondrion inner membrane. In terms of biological role, component of the ubiquinol-cytochrome c reductase complex (complex III or cytochrome b-c1 complex) that is part of the mitochondrial respiratory chain. The b-c1 complex mediates electron transfer from ubiquinol to cytochrome c. Contributes to the generation of a proton gradient across the mitochondrial membrane that is then used for ATP synthesis. This is Cytochrome b (MT-CYB) from Akodon dayi (Day's grass mouse).